A 291-amino-acid chain; its full sequence is Potassium-transporting ATPase subunit beta (291 aa).

At 1-36 (MAALQEKKTCGQRMEEFQRYCWNPDTGQMLGRTLSR) the chain is on the cytoplasmic side. A helical; Signal-anchor for type II membrane protein membrane pass occupies residues 37–57 (WVWISLYYVAFYVVMTGLFAL). Over 58–291 (CLYVLMQTVD…KVEFKLKIEK (234 aa)) the chain is Extracellular. N-linked (GlcNAc...) asparagine glycans are attached at residues N99, N103, N130, N146, and N161. C131 and C152 form a disulfide bridge. C162 and C178 form a disulfide bridge. N-linked (GlcNAc...) asparagine glycans are attached at residues N193 and N222. Residues 194–291 (GSAPRVDCAF…KVEFKLKIEK (98 aa)) form an immunoglobulin-like region. A disulfide bridge links C201 with C263.

The protein belongs to the X(+)/potassium ATPases subunit beta family. In terms of assembly, the ATPase pump is composed of two subunits: alpha (catalytic) and beta (regulatory). Interacts with alpha subunit ATP12A; this interaction is required for the formation of a functionally active pump and targeting at the plasma membrane. Interacts (via N-terminus) with alpha subunit ATP4A (via the P-domain). N-glycosylation is necessary for assembly and functional expression of the pump at the plasma membrane.

The protein resides in the apical cell membrane. Its subcellular location is the cell membrane. Functionally, the beta subunit of the gastric H(+)/K(+) ATPase pump which transports H(+) ions in exchange for K(+) ions across the apical membrane of parietal cells. Plays a structural and regulatory role in the assembly and membrane targeting of a functionally active pump. Within a transport cycle, the transfer of a H(+) ion across the membrane is coupled to ATP hydrolysis and is associated with a transient phosphorylation of the alpha subunit that shifts the pump conformation from inward-facing (E1) to outward-facing state (E2). Interacts with the phosphorylation domain of the alpha subunit and functions as a ratchet, stabilizing the lumenal-open E2 conformation and preventing the reverse reaction of the transport cycle. This is Potassium-transporting ATPase subunit beta from Homo sapiens (Human).